A 216-amino-acid chain; its full sequence is MKINTVLFDLDGTLINTNELIISSFLHTLHTYYPNQYKREDVLPFIGPSLHDTFSKIDESKVEELITSYRQFNHDHHDELVEEYETVYETVQELKKQGYKVGIVTTKARQTVEMGLKLSKLDEFFDVVVTIDDVEHVKPHPEPLQKALQLLGAKPEEALMVGDNHHDIVGGQNAGTKTAAVSWTLKGRAYLEAYKPDFMLDKMSDLLPILSDMNRS.

Residue Asp-9 is the Nucleophile of the active site.

Belongs to the HAD-like hydrolase superfamily. PpaX family. Mg(2+) is required as a cofactor.

The catalysed reaction is diphosphate + H2O = 2 phosphate + H(+). Functionally, hydrolyzes pyrophosphate formed during P-Ser-HPr dephosphorylation by HPrK/P. Might play a role in controlling the intracellular pyrophosphate pool. This chain is Pyrophosphatase PpaX, found in Bacillus cereus (strain AH820).